We begin with the raw amino-acid sequence, 373 residues long: XK-related protein 9 (373 aa).

8 helical membrane passes run 8–28 (FMMS…DIVL), 38–58 (YVLG…VHCF), 166–186 (MVIM…QIAL), 206–226 (LFYK…LLFV), 230–250 (VALL…FINH), 256–276 (SVSM…FTFF), 295–315 (VLGT…IFNS), and 318–338 (FIPI…FLGV).

It belongs to the XK family. Post-translationally, undergoes proteolytic processing by caspase-3 (CASP3), caspase-6 (CASP6) and caspase-7 (CASP7) to generate the XK-related protein 9, processed form, leading to its activation. Highly expressed in the small intestines; weakly expressed in the pancreas, liver, stomach, and large intestines.

The protein localises to the cell membrane. It carries out the reaction a 1,2-diacyl-sn-glycero-3-phospho-L-serine(in) = a 1,2-diacyl-sn-glycero-3-phospho-L-serine(out). With respect to regulation, activated upon caspase cleavage to generate the XK-related protein 9, processed form. Does not act prior the onset of apoptosis. Its function is as follows. Phospholipid scramblase that promotes phosphatidylserine exposure on apoptotic cell surface. Phosphatidylserine is a specific marker only present at the surface of apoptotic cells and acts as a specific signal for engulfment. This chain is XK-related protein 9, found in Mus musculus (Mouse).